The primary structure comprises 365 residues: Nicotinate N-methyltransferase 1 (365 aa).

Asp232 provides a ligand contact to S-adenosyl-L-methionine.

This sequence belongs to the class I-like SAM-binding methyltransferase superfamily. Cation-independent O-methyltransferase family.

It carries out the reaction nicotinate + S-adenosyl-L-methionine = N-methylnicotinate + S-adenosyl-L-homocysteine. In terms of biological role, involved in nicotinate detoxification in planta. Catalyzes the conversion of nicotinate to N-methylnicotinate, which is a detoxified form of endogenous nicotinate in planta. The polypeptide is Nicotinate N-methyltransferase 1 (Oryza sativa subsp. japonica (Rice)).